A 129-amino-acid chain; its full sequence is Glycine cleavage system H protein (129 aa).

The 83-residue stretch at 24 to 106 (SYTVGISEHA…FGDGWFFRVM (83 aa)) folds into the Lipoyl-binding domain. The residue at position 65 (Lys65) is an N6-lipoyllysine.

This sequence belongs to the GcvH family. As to quaternary structure, the glycine cleavage system is composed of four proteins: P, T, L and H. The cofactor is (R)-lipoate.

Its function is as follows. The glycine cleavage system catalyzes the degradation of glycine. The H protein shuttles the methylamine group of glycine from the P protein to the T protein. In Shewanella sediminis (strain HAW-EB3), this protein is Glycine cleavage system H protein.